The primary structure comprises 357 residues: Chorismate synthase (357 aa).

NADP(+) is bound at residue Arg47. FMN is bound by residues 123 to 125 (RSS), Gly281, 296 to 300 (KPTSS), and Arg324.

It belongs to the chorismate synthase family. Homotetramer. FMNH2 is required as a cofactor.

The catalysed reaction is 5-O-(1-carboxyvinyl)-3-phosphoshikimate = chorismate + phosphate. It functions in the pathway metabolic intermediate biosynthesis; chorismate biosynthesis; chorismate from D-erythrose 4-phosphate and phosphoenolpyruvate: step 7/7. In terms of biological role, catalyzes the anti-1,4-elimination of the C-3 phosphate and the C-6 proR hydrogen from 5-enolpyruvylshikimate-3-phosphate (EPSP) to yield chorismate, which is the branch point compound that serves as the starting substrate for the three terminal pathways of aromatic amino acid biosynthesis. This reaction introduces a second double bond into the aromatic ring system. This Chlamydia muridarum (strain MoPn / Nigg) protein is Chorismate synthase.